We begin with the raw amino-acid sequence, 1219 residues long: MPVSTSLHQDGSQERPVSLTSTTSSSGSSCDSRSAMEEPSSSEAPAKNGAGSLRSRHLPNSNNNSSSWLNVKGPLSPFNSRAAAGPAHHKLSYLGRVVREIVETERMYVQDLRSIVEDYLLKIIDTPGLLKPEQVSALFGNIENIYALNSQLLRDLDSCNSDPVAVASCFVERSQEFDIYTQYCNNYPNSVAALTECMRDKQQAKFFRDRQELLQHSLPLGSYLLKPVQRILKYHLLLQEIAKHFDEEEDGFEVVEDAIDTMTCVAWYINDMKRRHEHAVRLQEIQSLLINWKGPDLTTYGELVLEGTFRVHRVRNERTFFLFDKTLLITKKRGDHFVYKGNIPCSSLMLIESTRDSLCFTVTHYKHSKQQYSIQAKTVEEKRNWTHHIKRLILENHHATIPQKAKEAILEMDSYYPNRYRCSPERLKKAWSSQDEVSTNVRQGRRQSEPTKHLLRQLNEKARAAGMKGKGRRESESSRSSRRPSGRSPTSTEKRMSFESISSLPEVEPDPEAGSEQEVFSAVEGPSAEETPSDTESPEVLETQLDAHQGLLGMDPPGDMVDFVAAESTEDLKALSSEEEEEMGGAAQEPESLLPPSVLDQASVIAERFVSSFSRRSSVAQEDSKSSGFGSPRLVSRSSSVLSLEGSEKGLARHGSATDSLSCQLSPEVDISVGVATEDSPSVNGMEPPSPGCPVEPDRSSCKKKESALSTRDRLLLDKIKSYYENAEHHDAGFSVRRRESLSYIPKGLVRNSISRFNSLPRPDPEPVPPVGSKRQVGSRPTSWALFELPGPSQAVKGDPPPISDAEFRPSSEIVKIWEGMESSGGSPGKGPGQGQANGFDLHEPLFILEEHELGAITEESATASPESSSPTEGRSPAHLARELKELVKELSSSTQGELVAPLHPRIVQLSHVMDSHVSERVKNKVYQLARQYSLRIKSNKPVMARPPLQWEKVAPERDGKSPTVPCLQEEAGEPLGGKGKRKPVLSLFDYEQLMAQEHSPPKPSSAGEMSPQRFFFNPSAVSQRTTSPGGRPSARSPLSPTETFSWPDVRELCSKYASRDEARRAGGGRPRGPPVNRSHSVPENMVEPPLSGRVGRCRSLSTKRGRGGGEAAQSPGPLPQSKPDGGETLYVTADLTLEDNRRVIVMEKGPLPSPTAGLEESSGQGPSSPVALLGQVQDFQQSAECQPKEEGSRDPADPSQQGRVRNLREKFQALNSVG.

Residues 1–10 (MPVSTSLHQD) are compositionally biased toward polar residues. The disordered stretch occupies residues 1 to 66 (MPVSTSLHQD…HLPNSNNNSS (66 aa)). Residues 18–46 (SLTSTTSSSGSSCDSRSAMEEPSSSEAPA) show a composition bias toward low complexity. Ser-76 carries the phosphoserine modification. The 180-residue stretch at 93–272 (YLGRVVREIV…TCVAWYINDM (180 aa)) folds into the DH domain. One can recognise a PH domain in the interval 296-394 (DLTTYGELVL…WTHHIKRLIL (99 aa)). Residues 431–442 (WSSQDEVSTNVR) are compositionally biased toward polar residues. Disordered regions lie at residues 431 to 599 (WSSQ…PSVL) and 613 to 708 (FSRR…KESA). Ser-433 is subject to Phosphoserine. A compositionally biased stretch (basic and acidic residues) spans 446–463 (RQSEPTKHLLRQLNEKAR). A phosphoserine mark is found at Ser-576, Ser-577, Ser-618, Ser-631, Ser-640, Ser-643, and Ser-647. Positions 630–645 (GSPRLVSRSSSVLSLE) are enriched in low complexity. A compositionally biased stretch (basic and acidic residues) spans 696–708 (EPDRSSCKKKESA). Residues Ser-741, Ser-779, and Ser-827 each carry the phosphoserine modification. 5 disordered regions span residues 756–780 (RFNS…VGSR), 821–840 (MESS…ANGF), 859–878 (EESA…RSPA), 955–1133 (APER…LYVT), and 1146–1207 (VMEK…RVRN). Gly residues predominate over residues 826–836 (GSPGKGPGQGQ). Residues 859–873 (EESATASPESSSPTE) are compositionally biased toward low complexity. Phosphoserine is present on residues Ser-962, Ser-1011, Ser-1023, Ser-1037, and Ser-1040. Residues 1020–1029 (SAVSQRTTSP) are compositionally biased toward polar residues. Basic and acidic residues predominate over residues 1049 to 1065 (DVRELCSKYASRDEARR). Ser-1081 bears the Phosphoserine mark. Omega-N-methylarginine is present on Arg-1107. The segment covering 1187 to 1197 (QPKEEGSRDPA) has biased composition (basic and acidic residues).

The protein resides in the cytoplasm. It localises to the cytoskeleton. In terms of biological role, plays a role in controlling cell polarity and cell motility by selectively binding newly polymerized actin and activating RAC1 and CDC42 to enhance local actin polymerization. This is Pleckstrin homology domain-containing family G member 3 from Homo sapiens (Human).